The primary structure comprises 132 residues: D-ribose pyranase (132 aa).

His-20 functions as the Proton donor in the catalytic mechanism. Substrate-binding positions include Asp-28, His-99, and 121–123; that span reads YSN.

The protein belongs to the RbsD / FucU family. RbsD subfamily. As to quaternary structure, homodecamer.

Its subcellular location is the cytoplasm. The enzyme catalyses beta-D-ribopyranose = beta-D-ribofuranose. The protein operates within carbohydrate metabolism; D-ribose degradation; D-ribose 5-phosphate from beta-D-ribopyranose: step 1/2. In terms of biological role, catalyzes the interconversion of beta-pyran and beta-furan forms of D-ribose. The polypeptide is D-ribose pyranase (Streptococcus agalactiae serotype V (strain ATCC BAA-611 / 2603 V/R)).